Consider the following 492-residue polypeptide: Homoserine O-acetyltransferase (492 aa).

One can recognise an AB hydrolase-1 domain in the interval 47–354 (NVILVCHALT…NYGHDAFLLE (308 aa)). The active-site Nucleophile is Ser152. Arg221 provides a ligand contact to substrate. Catalysis depends on residues Asp315 and His348. A substrate-binding site is contributed by Asp349. CBS domains lie at 375–432 (MKLD…FTTL) and 436–492 (LTKN…HRCT).

The protein belongs to the AB hydrolase superfamily. MetX family. In terms of assembly, homodimer.

It localises to the cytoplasm. It carries out the reaction L-homoserine + acetyl-CoA = O-acetyl-L-homoserine + CoA. It participates in amino-acid biosynthesis; L-methionine biosynthesis via de novo pathway; O-acetyl-L-homoserine from L-homoserine: step 1/1. Transfers an acetyl group from acetyl-CoA to L-homoserine, forming acetyl-L-homoserine. The sequence is that of Homoserine O-acetyltransferase from Methanosalsum zhilinae (strain DSM 4017 / NBRC 107636 / OCM 62 / WeN5) (Methanohalophilus zhilinae).